We begin with the raw amino-acid sequence, 106 residues long: CLAVATA3/ESR (CLE)-related protein 21 (106 aa).

The first 31 residues, 1-31 (MLILSSRYAMKRDVLIIVIFTVLVLIIISRS), serve as a signal peptide directing secretion. Asn47 carries N-linked (GlcNAc...) asparagine glycosylation. Residues 72 to 82 (KVRRRSSRFRR) show a composition bias toward basic residues. Residues 72–106 (KVRRRSSRFRRKTDGDEEEEEKRSIPTGPNPLHNK) form a disordered region. Hydroxyproline occurs at positions 97 and 100. An O-linked (Ara...) hydroxyproline glycan is attached at Pro100.

The protein belongs to the CLV3/ESR signal peptide family. In terms of processing, the O-glycosylation (arabinosylation) of the hydroxyproline Pro-100 enhances binding affinity of the CLE21p peptide for its receptor. Mostly expressed in leaves and apex, and, to a lower extent, in seedlings, flowers, stems and siliques.

The protein resides in the secreted. It is found in the extracellular space. Its function is as follows. Extracellular signal peptide that regulates cell fate. Represses root apical meristem maintenance. Regulates the transition of protophloem cells from proliferation to differentiation, thus impinging on postembryonic growth capacity of the root meristem; this signaling pathway requires CRN and CLV2. The sequence is that of CLAVATA3/ESR (CLE)-related protein 21 from Arabidopsis thaliana (Mouse-ear cress).